Here is a 427-residue protein sequence, read N- to C-terminus: tRNA pseudouridine synthase Pus10 (427 aa).

The Nucleophile role is filled by Asp-240. Tyr-306 and Tyr-378 together coordinate substrate.

The protein belongs to the pseudouridine synthase Pus10 family.

The enzyme catalyses uridine(54) in tRNA = pseudouridine(54) in tRNA. It carries out the reaction uridine(55) in tRNA = pseudouridine(55) in tRNA. Functionally, responsible for synthesis of pseudouridine from uracil-54 and uracil-55 in the psi GC loop of transfer RNAs. The sequence is that of tRNA pseudouridine synthase Pus10 from Halorubrum lacusprofundi (strain ATCC 49239 / DSM 5036 / JCM 8891 / ACAM 34).